The following is a 286-amino-acid chain: Pantothenate synthetase (286 aa).

Residue 32-39 (MGALHEGH) coordinates ATP. H39 (proton donor) is an active-site residue. Residue Q63 participates in (R)-pantoate binding. A beta-alanine-binding site is contributed by Q63. 149–152 (GEKD) serves as a coordination point for ATP. Q155 serves as a coordination point for (R)-pantoate. ATP-binding positions include L178 and 186-189 (SSSR).

The protein belongs to the pantothenate synthetase family. As to quaternary structure, homodimer.

The protein resides in the cytoplasm. The catalysed reaction is (R)-pantoate + beta-alanine + ATP = (R)-pantothenate + AMP + diphosphate + H(+). It functions in the pathway cofactor biosynthesis; (R)-pantothenate biosynthesis; (R)-pantothenate from (R)-pantoate and beta-alanine: step 1/1. Its function is as follows. Catalyzes the condensation of pantoate with beta-alanine in an ATP-dependent reaction via a pantoyl-adenylate intermediate. In Bartonella quintana (strain Toulouse) (Rochalimaea quintana), this protein is Pantothenate synthetase.